A 75-amino-acid polypeptide reads, in one-letter code: U6-lycotoxin-Ls1d (75 aa).

A signal peptide spans 1 to 21 (MKLLLFTALVLVVISLVEVEA). The propeptide occupies 22-25 (ENER).

The protein belongs to the neurotoxin 19 (CSTX) family. 06 (U6-Lctx) subfamily. Contains 4 disulfide bonds. Expressed by the venom gland.

It is found in the secreted. This is U6-lycotoxin-Ls1d from Lycosa singoriensis (Wolf spider).